We begin with the raw amino-acid sequence, 85 residues long: uncharacterized protein (85 aa).

This is an uncharacterized protein from Acidianus filamentous virus 2 (isolate Italy/Pozzuoli) (AFV-2).